We begin with the raw amino-acid sequence, 320 residues long: E3 ubiquitin-protein ligase RZF1 (320 aa).

Ser-2 bears the N-acetylserine mark. The segment at 186–227 (CPVCKDEFELKSEAKQMPCHHIYHSDCIVPWLVQHNSCPVCR) adopts an RING-type; atypical zinc-finger fold. A disordered region spans residues 229–320 (ELPSRGSSSS…MGYSGWPFDY (92 aa)). Composition is skewed to low complexity over residues 232–249 (SRGS…STNG) and 295–308 (QQQQ…QQQQ).

As to expression, expressed in seedlings and in flowers.

The enzyme catalyses S-ubiquitinyl-[E2 ubiquitin-conjugating enzyme]-L-cysteine + [acceptor protein]-L-lysine = [E2 ubiquitin-conjugating enzyme]-L-cysteine + N(6)-ubiquitinyl-[acceptor protein]-L-lysine.. E3 ubiquitin-protein ligase that promotes osmotic stress and abscisic acid (ABA) responses. Negatively regulates drought-mediated control of early seedling development, probably by influencing proline content, water loss, membrane ion leakage and the expression of dehydration stress-related genes (e.g. RAB18, RD29A, RD29B, AOX1A, ERD15, ERD1, COR15A, P5CS1 and P5CR). Modulates bZIP11 accumulation during rehydration following drought. The sequence is that of E3 ubiquitin-protein ligase RZF1 from Arabidopsis thaliana (Mouse-ear cress).